A 655-amino-acid chain; its full sequence is Protein nipi-3 (655 aa).

The disordered stretch occupies residues 1 to 35; the sequence is MARTKCKTKTVANPRTGVRKTAKDLSEPVRQDAVS. The span at 21-35 shows a compositional bias: basic and acidic residues; the sequence is TAKDLSEPVRQDAVS. One can recognise a Protein kinase domain in the interval 200–470; sequence IGIFVIYGTG…NQVNGDFPEI (271 aa). ATP contacts are provided by residues 206–214 and lysine 235; that span reads YGTGLVTRA.

Belongs to the protein kinase superfamily. CAMK Ser/Thr protein kinase family. As to quaternary structure, may interact with transcription factor cebp-1 (via N-terminus). Expressed in epidermis, pharynx, intestine, a subset of head neurons and motoneurons.

It localises to the nucleus. Its function is as follows. Adapter protein that regulates different signaling pathways. Required for larval development and viability. Involved in negatively modulating pmk-1 p38/MAPK signaling. Involved in innate immunity, acting either in a manner dependent upon, or independent of, the pmk-1 or pmk-3 p38/MAPK pathways. Has a protective role in response to infection by the Gram-negative bacterium P.aeruginosa, acting by negatively modulating expression of cebp-1, and regulating the pmk-1 p38/MAPK pathway, leading to activation of transcription factor skn-1. Required to prevent P.aeruginosa toxin ToxA-mediated lethality, probably acting via modulating the effects of translational inhibition caused by the toxin. By regulating the up-regulation in the epidermis of antimicrobial peptides nlp-29 and nlp-31, plays a role in resistance to fungal infection. This chain is Protein nipi-3, found in Caenorhabditis elegans.